A 228-amino-acid chain; its full sequence is Cytidylate kinase (228 aa).

Residue 17–25 (GPTASGKGT) coordinates ATP.

Belongs to the cytidylate kinase family. Type 1 subfamily.

The protein resides in the cytoplasm. It carries out the reaction CMP + ATP = CDP + ADP. The enzyme catalyses dCMP + ATP = dCDP + ADP. The polypeptide is Cytidylate kinase (Burkholderia vietnamiensis (strain G4 / LMG 22486) (Burkholderia cepacia (strain R1808))).